The following is a 479-amino-acid chain: Poly(A) polymerase catalytic subunit (479 aa).

Catalysis depends on residues Asp202 and Asp204. Ca(2+) is bound by residues Asp202, Asp204, and Asp253.

It belongs to the poxviridae poly(A) polymerase catalytic subunit family. Heterodimer of a large (catalytic) subunit and a small (regulatory) subunit.

The enzyme catalyses RNA(n) + ATP = RNA(n)-3'-adenine ribonucleotide + diphosphate. In terms of biological role, polymerase that creates the 3'-poly(A) tail of mRNA's. The protein is Poly(A) polymerase catalytic subunit (OPG063) of Mus musculus (Mouse).